A 536-amino-acid chain; its full sequence is Maintenance of mitochondrial morphology protein 1 (536 aa).

Topologically, residues 1 to 25 (MAGPSNQTQPPPPVLTQPSLSFTQG) are lumenal. The chain crosses the membrane as a helical span at residues 26–46 (LLVGQLSVVLLIGAFIKFFIF). Residues 47–536 (GEAPPHPSRN…GSMPDPVVVT (490 aa)) are Cytoplasmic-facing. Disordered regions lie at residues 52 to 135 (HPSR…SHQP), 275 to 331 (GPGT…ATAA), 416 to 467 (GRTG…GGSM), and 505 to 536 (YGGA…VVVT). 3 stretches are compositionally biased toward polar residues: residues 69–81 (YSLN…SSPR), 88–105 (STSN…NTRS), and 112–121 (YSATPTNPTS). Residues 122 to 132 (KHSRSRPHHSS) are compositionally biased toward basic residues. In terms of domain architecture, SMP-LTD spans 134 to 409 (QPESLDWFNV…EPRVQVVGLP (276 aa)). The segment covering 321–331 (TNTNTAGATAA) has biased composition (low complexity). Gly residues-rich tracts occupy residues 442 to 467 (TAGG…GGSM) and 507 to 517 (GAQGGGGGGGR).

It belongs to the MMM1 family. In terms of assembly, homodimer. Component of the ER-mitochondria encounter structure (ERMES) or MDM complex, composed of MMM1, MDM10, MDM12 and MDM34. An MMM1 homodimer associates with one molecule of MDM12 on each side in a pairwise head-to-tail manner, and the SMP-LTD domains of MMM1 and MDM12 generate a continuous hydrophobic tunnel for phospholipid trafficking.

Its subcellular location is the endoplasmic reticulum membrane. Functionally, component of the ERMES/MDM complex, which serves as a molecular tether to connect the endoplasmic reticulum (ER) and mitochondria. Components of this complex are involved in the control of mitochondrial shape and protein biogenesis, and function in nonvesicular lipid trafficking between the ER and mitochondria. The MDM12-MMM1 subcomplex functions in the major beta-barrel assembly pathway that is responsible for biogenesis of all outer membrane beta-barrel proteins, and acts in a late step after the SAM complex. The MDM10-MDM12-MMM1 subcomplex further acts in the TOM40-specific pathway after the action of the MDM12-MMM1 complex. Essential for establishing and maintaining the structure of mitochondria and maintenance of mtDNA nucleoids. This chain is Maintenance of mitochondrial morphology protein 1, found in Ajellomyces dermatitidis (strain ER-3 / ATCC MYA-2586) (Blastomyces dermatitidis).